A 252-amino-acid polypeptide reads, in one-letter code: MMLHAQHMPGQPGAPSLVFLHGFSGDCREWQPVGEQFHGCSRLYIDLPGHGGSTAIPVGGFADVIRLLRATLISYNILKFWLVGYSLGGRVAMMAACQGIPGLCGLVVEGGHPGLQNEQARAERRLSDGRWAERFRREPLTEVFHDWYQQPVFASLTAQQRQTLTALRSQNNGETLAAMLEATSLAAQPDLREALNALAFPFYYLCGERDSKFRALAQEVAATCHVIRNAGHNAHRENPAGVVDSLAQILRL.

The protein belongs to the AB hydrolase superfamily. MenH family. Monomer.

The catalysed reaction is 5-enolpyruvoyl-6-hydroxy-2-succinyl-cyclohex-3-ene-1-carboxylate = (1R,6R)-6-hydroxy-2-succinyl-cyclohexa-2,4-diene-1-carboxylate + pyruvate. The protein operates within quinol/quinone metabolism; 1,4-dihydroxy-2-naphthoate biosynthesis; 1,4-dihydroxy-2-naphthoate from chorismate: step 3/7. Its pathway is quinol/quinone metabolism; menaquinone biosynthesis. In terms of biological role, catalyzes a proton abstraction reaction that results in 2,5-elimination of pyruvate from 2-succinyl-5-enolpyruvyl-6-hydroxy-3-cyclohexene-1-carboxylate (SEPHCHC) and the formation of 2-succinyl-6-hydroxy-2,4-cyclohexadiene-1-carboxylate (SHCHC). In Salmonella heidelberg (strain SL476), this protein is 2-succinyl-6-hydroxy-2,4-cyclohexadiene-1-carboxylate synthase.